Reading from the N-terminus, the 375-residue chain is LIM domain-binding protein 1 (375 aa).

Disordered regions lie at residues Pro248–Leu294 and Asp331–Gln375. The span at Ser266 to Asn282 shows a compositional bias: low complexity. The LIM interaction domain (LID) domain maps to Asp300–Glu339.

It belongs to the LDB family. Forms homodimers and heterodimers. Interacts with the LIM domain of LIM/homeobox factor lhx1/lim1, and with lhx3/lim3 and lhx5/lim5. Activates lhx1/lim1 by binding. The stoichiometry of lhx1/lim1 and ldb1 is important for their function and an excess of ldb1 can inhibit lhx1/lim1 function. When bound to lhx1/lim1, escapes degradation by rnf12. The N-terminus interacts with the N-terminal region of rnf12. Post-translationally, undergoes rnf12-mediated ubiquitin-proteasome-dependent degradation. In terms of tissue distribution, ubiquitously expressed in the early gastrula before localizing to the dorsal region of the vegetal hemisphere, which contains the Spemann organizer. Expressed in the CNS, pronephros and tail bud in neurula and tail-bud stage embryos. Expressed in multiple adult tissues including brain, heart, lung, stomach, intestine, liver, spleen, kidney, ovary, muscle and skin.

Its subcellular location is the nucleus. Functionally, binds to the LIM domain of a wide variety of LIM domain-containing transcription factors. Acts as a coactivator together with otx2 to stimulate lhx1/lim1-mediated activation of the gsc promoter in the Spemann organizer. Acts synergistically with lhx1/lim1 and ssbp in axis formation. This is LIM domain-binding protein 1 (ldb1) from Xenopus laevis (African clawed frog).